Here is a 108-residue protein sequence, read N- to C-terminus: Peptidyl-prolyl cis-trans isomerase FKBP1A (108 aa).

One can recognise a PPIase FKBP-type domain in the interval 20-108 (GQTVVVHYVG…TFDVELLRLE (89 aa)).

The protein belongs to the FKBP-type PPIase family. FKBP1 subfamily.

The protein localises to the cytoplasm. It catalyses the reaction [protein]-peptidylproline (omega=180) = [protein]-peptidylproline (omega=0). Its activity is regulated as follows. Inhibited by both FK506 and rapamycin. Keeps in an inactive conformation TGFBR1, the TGF-beta type I serine/threonine kinase receptor, preventing TGF-beta receptor activation in absence of ligand. May modulate the RYR1 calcium channel activity. PPIases accelerate the folding of proteins. It catalyzes the cis-trans isomerization of proline imidic peptide bonds in oligopeptides. This is Peptidyl-prolyl cis-trans isomerase FKBP1A (fkbp1a) from Xenopus laevis (African clawed frog).